The primary structure comprises 245 residues: Probable phosphatase YPTB2019 (245 aa).

Residues histidine 7, histidine 9, histidine 15, histidine 40, glutamate 73, histidine 101, histidine 131, aspartate 192, and histidine 194 each coordinate Zn(2+).

The protein belongs to the PHP family. In terms of assembly, homotrimer. It depends on Zn(2+) as a cofactor.

The polypeptide is Probable phosphatase YPTB2019 (Yersinia pseudotuberculosis serotype I (strain IP32953)).